A 679-amino-acid polypeptide reads, in one-letter code: Enzymatic polyprotein (679 aa).

Residues 40-130 (LHCFVDTGAS…LYEPFIQFTD (91 aa)) are protease. Asp45 is an active-site residue. Residues 272 to 452 (LKVIKPSKSP…KKINFLGLEI (181 aa)) enclose the Reverse transcriptase domain.

Belongs to the caulimoviridae enzymatic polyprotein family.

The catalysed reaction is DNA(n) + a 2'-deoxyribonucleoside 5'-triphosphate = DNA(n+1) + diphosphate. Encodes for at least two polypeptides: protease (PR) and reverse transcriptase (RT). The protease processes the polyprotein in cis. Reverse transcriptase is multifunctional enzyme that converts the viral RNA genome into dsDNA in viral cytoplasmic capsids. This enzyme displays a DNA polymerase activity that can copy either DNA or RNA templates, and a ribonuclease H (RNase H) activity that cleaves the RNA strand of RNA-DNA heteroduplexes in a partially processive 3'- to 5'-endonucleasic mode. Neo-synthesized pregenomic RNA (pgRNA) are encapsidated, and reverse-transcribed inside the nucleocapsid. Partial (+)DNA is synthesized from the (-)DNA template and generates the relaxed circular DNA (RC-DNA) genome. After budding and infection, the RC-DNA migrates in the nucleus, and is converted into a plasmid-like covalently closed circular DNA (cccDNA). The polypeptide is Enzymatic polyprotein (Cauliflower mosaic virus (strain CM-1841) (CaMV)).